Here is a 233-residue protein sequence, read N- to C-terminus: Large ribosomal subunit protein uL1 (233 aa).

This sequence belongs to the universal ribosomal protein uL1 family. In terms of assembly, part of the 50S ribosomal subunit.

Its function is as follows. Binds directly to 23S rRNA. The L1 stalk is quite mobile in the ribosome, and is involved in E site tRNA release. In terms of biological role, protein L1 is also a translational repressor protein, it controls the translation of the L11 operon by binding to its mRNA. This Nautilia profundicola (strain ATCC BAA-1463 / DSM 18972 / AmH) protein is Large ribosomal subunit protein uL1.